The primary structure comprises 484 residues: MKFIVKLYPEIMMKSKPVRMRFTKMLETNIRNVLKKVDDDAKVQRQWDRIMVMVPKNKPELAQAFGERLACIPGIAHVVQVDEYSFTSVDDIYQQVLPVYRDQIAGKTFCVRVKRTGSHDFNSIEVERYVGGGLNQFTDAIGVRLKNPEVTVNLEIEGDKLYMVTKRIEGLGGFPMATQEDVLSLISGGFDSGVSSYQFIKKGARTHYCFFNLGGAQHEIGVKQVAYHLWKTFGESHKVKFVSVPFEPVVAEILEKIDNGQMGVVLKRMMMRTAARIAERMGIQAIVTGESLGQVSSQTLTNLNVIDRCTDMLILRPLITMDKQDIINECRRIGTEDFAKSMPEYCGVISQKPTVKAVLAKVEAEETKFSEDLIDRIVEQAVAIDIREIAEQMNTRITETETVVAIDTNEVVIDIRAPEEEENKPLEIEGVEIKRIPFFKLATQFADLDKQKTYLLYCERGVMSKLQALYLIEQGYHNVKVYRP.

One can recognise a THUMP domain in the interval 63-167; that stretch reads QAFGERLACI…GDKLYMVTKR (105 aa). ATP is bound by residues 185–186, Lys267, Gly289, and Gln298; that span reads LI. Cys346 and Cys458 are joined by a disulfide. The Rhodanese domain maps to 406–484; the sequence is IDTNEVVIDI…GYHNVKVYRP (79 aa). Cys458 functions as the Cysteine persulfide intermediate in the catalytic mechanism.

This sequence belongs to the ThiI family.

Its subcellular location is the cytoplasm. The enzyme catalyses [ThiI sulfur-carrier protein]-S-sulfanyl-L-cysteine + a uridine in tRNA + 2 reduced [2Fe-2S]-[ferredoxin] + ATP + H(+) = [ThiI sulfur-carrier protein]-L-cysteine + a 4-thiouridine in tRNA + 2 oxidized [2Fe-2S]-[ferredoxin] + AMP + diphosphate. It catalyses the reaction [ThiS sulfur-carrier protein]-C-terminal Gly-Gly-AMP + S-sulfanyl-L-cysteinyl-[cysteine desulfurase] + AH2 = [ThiS sulfur-carrier protein]-C-terminal-Gly-aminoethanethioate + L-cysteinyl-[cysteine desulfurase] + A + AMP + 2 H(+). It functions in the pathway cofactor biosynthesis; thiamine diphosphate biosynthesis. Its function is as follows. Catalyzes the ATP-dependent transfer of a sulfur to tRNA to produce 4-thiouridine in position 8 of tRNAs, which functions as a near-UV photosensor. Also catalyzes the transfer of sulfur to the sulfur carrier protein ThiS, forming ThiS-thiocarboxylate. This is a step in the synthesis of thiazole, in the thiamine biosynthesis pathway. The sulfur is donated as persulfide by IscS. The polypeptide is tRNA sulfurtransferase (Shewanella oneidensis (strain ATCC 700550 / JCM 31522 / CIP 106686 / LMG 19005 / NCIMB 14063 / MR-1)).